Consider the following 415-residue polypeptide: MLQCIFLISDSGEVMLEKQLTGHRVDRSICAWFWDQYISQGDSFKALPVIASPTHYLFQIVRDGITFLACSQVEMPPLMAIEFLCRVADVLSEYLGGLNEDLIKDNFIIVYELLDEMIDNGFPLTTEPSILKEMIAPPNLVSKMLSVVTGNASNVSDTLPSGAGSCVPWRPTDPKYSSNEVYVDLVEEMDAIVNRDGELVKCEIYGEVQMNSQLTGFPDLTLSFANPSILEDMRFHPCVRYRPWESHQVLSFVPPDGEFKLMSYRVKKLKNTPVYVKPQITSDSGTCRISVLVGIRSDPGKTIESITLSFQLPHCVSSADLSSNHGTVTILSNKTCTWTIGRIPKDKTPCLSGTLALEPGLERLHVFPTFKLGFKIMGIALSGLRIEKLDLQTIPPRLYKGFRAQTRAGEFDVRL.

The 237-residue stretch at 178–414 folds into the MHD domain; the sequence is SNEVYVDLVE…QTRAGEFDVR (237 aa).

This sequence belongs to the adaptor complexes medium subunit family. Adaptor protein complex 3 (AP-3) is a heterotetramer composed of two large adaptins (delta-type subunit and beta-type subunit), a medium adaptin (mu-type subunit) and a small adaptin (sigma-type subunit).

The protein localises to the cytoplasm. It localises to the golgi apparatus. It is found in the cytoplasmic vesicle membrane. Functionally, part of the AP-3 complex, an adaptor-related complex which seems to be clathrin-associated. The complex is associated with the Golgi region as well as more peripheral structures. It facilitates the budding of vesicles from the Golgi membrane and may be directly involved in trafficking to the vacuole. It also functions in maintaining the identity of lytic vacuoles and in regulating the transition between storage and lytic vacuoles. This Arabidopsis thaliana (Mouse-ear cress) protein is AP-3 complex subunit mu (AP3M).